The sequence spans 246 residues: Homeobox protein SIX6 (246 aa).

Residues tryptophan 126 to alanine 186 constitute a DNA-binding region (homeobox). The tract at residues asparagine 190–isoleucine 246 is disordered. The residue at position 212 (threonine 212) is a Phosphothreonine. Low complexity predominate over residues alanine 219 to isoleucine 246. Phosphoserine is present on residues serine 221, serine 225, serine 227, and serine 228.

This sequence belongs to the SIX/Sine oculis homeobox family. In terms of assembly, interacts with TLE4 and TLE5. As to expression, in the developing embryo, expressed mainly in the ventral optic stalk, optic chiasma, the neural retina and the primordial tissues that give rise to the pituitary/hypothalamus axis. Not expressed in the lens placode.

The protein localises to the nucleus. Its function is as follows. May be involved in eye development. This is Homeobox protein SIX6 (Six6) from Mus musculus (Mouse).